We begin with the raw amino-acid sequence, 102 residues long: A-type ATP synthase subunit F (102 aa).

The protein belongs to the V-ATPase F subunit family. In terms of assembly, has multiple subunits with at least A(3), B(3), C, D, E, F, H, I and proteolipid K(x).

It localises to the cell membrane. Functionally, component of the A-type ATP synthase that produces ATP from ADP in the presence of a proton gradient across the membrane. The protein is A-type ATP synthase subunit F of Thermococcus kodakarensis (strain ATCC BAA-918 / JCM 12380 / KOD1) (Pyrococcus kodakaraensis (strain KOD1)).